A 333-amino-acid chain; its full sequence is L-lactate dehydrogenase B chain (333 aa).

NAD(+)-binding positions include 29–57 and arginine 99; that span reads GQVG…LEDK. Positions 106, 138, and 169 each coordinate substrate. Asparagine 138 contributes to the NAD(+) binding site. The active-site Proton acceptor is histidine 193. Threonine 248 lines the substrate pocket.

The protein belongs to the LDH/MDH superfamily. LDH family. In terms of assembly, homotetramer.

It is found in the cytoplasm. The enzyme catalyses (S)-lactate + NAD(+) = pyruvate + NADH + H(+). It participates in fermentation; pyruvate fermentation to lactate; (S)-lactate from pyruvate: step 1/1. Interconverts simultaneously and stereospecifically pyruvate and lactate with concomitant interconversion of NADH and NAD(+). This chain is L-lactate dehydrogenase B chain (LDHB), found in Anas platyrhynchos (Mallard).